A 295-amino-acid chain; its full sequence is Pyridoxal 5'-phosphate synthase subunit PdxS (295 aa).

Position 25 (aspartate 25) interacts with D-ribose 5-phosphate. Lysine 82 acts as the Schiff-base intermediate with D-ribose 5-phosphate in catalysis. Glycine 154 serves as a coordination point for D-ribose 5-phosphate. Residue arginine 166 participates in D-glyceraldehyde 3-phosphate binding. D-ribose 5-phosphate-binding positions include glycine 215 and 236–237; that span reads GS.

This sequence belongs to the PdxS/SNZ family. In the presence of PdxT, forms a dodecamer of heterodimers.

The enzyme catalyses aldehydo-D-ribose 5-phosphate + D-glyceraldehyde 3-phosphate + L-glutamine = pyridoxal 5'-phosphate + L-glutamate + phosphate + 3 H2O + H(+). The protein operates within cofactor biosynthesis; pyridoxal 5'-phosphate biosynthesis. Its function is as follows. Catalyzes the formation of pyridoxal 5'-phosphate from ribose 5-phosphate (RBP), glyceraldehyde 3-phosphate (G3P) and ammonia. The ammonia is provided by the PdxT subunit. Can also use ribulose 5-phosphate and dihydroxyacetone phosphate as substrates, resulting from enzyme-catalyzed isomerization of RBP and G3P, respectively. The protein is Pyridoxal 5'-phosphate synthase subunit PdxS of Haemophilus ducreyi (strain 35000HP / ATCC 700724).